A 359-amino-acid polypeptide reads, in one-letter code: MSTENTLSVADLARENVRNLVPYQSARRLGGNGDVWLNANEFPTAVEFQLTQQTLNRYPECQPKAVIENYAQYAGVKPEQVLVSRGADEGIELMIRAFCEPGKDAILYCPPTYGMYSVSAETIGVERRTVPALENWQLDLQGISDNLDGTKVVFVCSPNNPTGQLINPQDLRTLLELTRGKAIVVADEAYIEFCPQATLTGWLVEYPHLVILRTLSKAFALAGLRCGFTLANEEVINLLLKVIAPYPLSTPVADIAAQALSPQGINAMRDRVAQTVQERQYLVNALQQTACVEHVFDSETNYILARFTASSNVFKSLWDQGIILRDQNKQPSLSGCLRITVGTRQENQRVIDALRAEPV.

Lysine 217 bears the N6-(pyridoxal phosphate)lysine mark.

This sequence belongs to the class-II pyridoxal-phosphate-dependent aminotransferase family. Histidinol-phosphate aminotransferase subfamily. Homodimer. It depends on pyridoxal 5'-phosphate as a cofactor.

The catalysed reaction is L-histidinol phosphate + 2-oxoglutarate = 3-(imidazol-4-yl)-2-oxopropyl phosphate + L-glutamate. Its pathway is amino-acid biosynthesis; L-histidine biosynthesis; L-histidine from 5-phospho-alpha-D-ribose 1-diphosphate: step 7/9. This is Histidinol-phosphate aminotransferase from Salmonella choleraesuis (strain SC-B67).